Consider the following 780-residue polypeptide: Pendrin (780 aa).

Residues 1 to 87 lie on the Cytoplasmic side of the membrane; it reads MAAPGGRSEP…YRVKEWLLSD (87 aa). The helical transmembrane segment at 88-108 threads the bilayer; it reads VISGVSTGLVATLQGMAYALL. Position 109 (Ala-109) is a topological domain, extracellular. Residues 110 to 130 form a helical membrane-spanning segment; that stretch reads AVPVGYGLYSAFFPILTYFIF. The Cytoplasmic portion of the chain corresponds to 131–135; it reads GTSRH. Residues 136–156 traverse the membrane as a helical segment; it reads ISVGPFPVVSLMVGSVVLSMA. The Extracellular portion of the chain corresponds to 157–191; that stretch reads PDEHFLVSSSNGTVLNTTMIDTAARDTARVLIASA. The chain crosses the membrane as a helical span at residues 192 to 212; sequence LTLLVGIIQLIFGGLQIGFIV. At 213-218 the chain is on the cytoplasmic side; that stretch reads RYLADP. Residues 219–239 form a helical membrane-spanning segment; the sequence is LVGGFTTAAAFQVLVSQLKIV. Topologically, residues 240-263 are extracellular; that stretch reads LNVSTKNYNGVLSIIYTLVEIFQN. The helical transmembrane segment at 264–284 threads the bilayer; that stretch reads IGDTNLADFTAGLLTIVVCMA. At 285–295 the chain is on the cytoplasmic side; sequence VKELNDRFRHK. The chain crosses the membrane as a helical span at residues 296 to 316; sequence IPVPIPIEVIVTIIATAISYG. The Extracellular segment spans residues 317–344; it reads ANLEKNYNAGIVKSIPRGFLPPELPPVS. A helical transmembrane segment spans residues 345–365; it reads LFSEMLAASFSIAVVAYAIAV. Residues 366–384 lie on the Cytoplasmic side of the membrane; it reads SVGKVYATKYDYTIDGNQE. Residues 385-405 form a helical membrane-spanning segment; sequence FIAFGISNIFSGFFSCFVATT. Residues 406-421 lie on the Extracellular side of the membrane; it reads ALSRTAVQESTGGKTQ. The chain crosses the membrane as a helical span at residues 422–442; the sequence is VAGIISAAIVMIAILALGKLL. The Cytoplasmic portion of the chain corresponds to 443-448; sequence EPLQKS. The helical transmembrane segment at 449–469 threads the bilayer; sequence VLAAVVIANLKGMFMQLCDIP. The Extracellular portion of the chain corresponds to 470–486; the sequence is RLWRQNKIDAVIWVFTC. Residues 487 to 507 traverse the membrane as a helical segment; that stretch reads IVSIILGLDLGLLAGLIFGLL. At 508–780 the chain is on the cytoplasmic side; it reads TVVLRVQFPS…QDEAMRTLAS (273 aa). The STAS domain occupies 535–729; sequence NYKNIEEPQG…LTVHDAILYL (195 aa).

Belongs to the SLC26A/SulP transporter (TC 2.A.53) family. Interacts with IQGAP1; this interaction enhances the chloride-bicarbonate exchange activity of SLC26A4. In terms of tissue distribution, highly expressed in the kidney (at protein level). High expression in adult thyroid, lower expression in adult and fetal kidney and fetal brain. Not expressed in other tissues.

It is found in the cell membrane. Its subcellular location is the apical cell membrane. It catalyses the reaction chloride(in) = chloride(out). The enzyme catalyses iodide(out) = iodide(in). It carries out the reaction hydrogencarbonate(in) + chloride(out) = hydrogencarbonate(out) + chloride(in). The catalysed reaction is iodide(in) + hydrogencarbonate(out) = iodide(out) + hydrogencarbonate(in). It catalyses the reaction iodide(in) + chloride(out) = iodide(out) + chloride(in). The enzyme catalyses formate(in) + chloride(out) = formate(out) + chloride(in). Functionally, sodium-independent transporter of chloride and iodide. Mediates electroneutral chloride-bicarbonate, chloride-iodide and chloride-formate exchange with 1:1 stoichiometry. Mediates electroneutral iodide-bicarbonate exchange. The protein is Pendrin (SLC26A4) of Homo sapiens (Human).